We begin with the raw amino-acid sequence, 727 residues long: Synaptic vesicle glycoprotein 2C (727 aa).

The interaction with SYT1 stretch occupies residues 1 to 57 (MEDSYKDRTSLMKGAKDIAREVKKQTVKKVNQAVDRAQDEYTQRSYSRFQDEEDDDD). The Cytoplasmic portion of the chain corresponds to 1-154 (MEDSYKDRTS…CGHGRFQWAL (154 aa)). 2 disordered regions span residues 24 to 84 (KQTV…GHDE) and 109 to 128 (VGQP…SERR). Phosphoserine is present on residues S75 and S76. Phosphothreonine is present on T79. Basic and acidic residues predominate over residues 113 to 128 (KGDEYKDRRELESERR). The chain crosses the membrane as a helical span at residues 155–175 (FFVLGMALMADGVEVFVVGFV). The Extracellular portion of the chain corresponds to 176–191 (LPSAETDLCIPNSGSG). A helical membrane pass occupies residues 192 to 212 (WLGSIVYLGMMVGAFFWGGLA). The Cytoplasmic segment spans residues 213–226 (DKVGRKQSLLICMS). Residues 227 to 247 (VNGFFAFLSSFVQGYGFFLFC) form a helical membrane-spanning segment. Position 248 (R248) is a topological domain, extracellular. Residues 249-269 (LLSGFGIGGAIPTVFSYFAEV) traverse the membrane as a helical segment. Topologically, residues 270–280 (LAREKRGEHLS) are cytoplasmic. Residues 281 to 301 (WLCMFWMIGGIYASAMAWAII) form a helical membrane-spanning segment. Residues 302–320 (PHYGWSFSMGSAYQFHSWR) are Extracellular-facing. Residues 321–341 (VFVIVCALPCVSSVVALTFMP) traverse the membrane as a helical segment. Over 342-437 (ESPRFLLEVG…PVRDNTIKLT (96 aa)) the chain is Cytoplasmic. Residues 438–458 (IVWFTLSFGYYGLSVWFPDVI) form a helical membrane-spanning segment. At 459-578 (KPLQSDEYAL…CQITFDDDYS (120 aa)) the chain is on the extracellular side. Phosphotyrosine is present on Y466. Residues N480, N484, N534, N559, and N565 are each glycosylated (N-linked (GlcNAc...) asparagine). The segment at 519-563 (SCTFEDVTSVNTYFKNCTFIDTVFDNTDFEPYKFIDSEFKNCSFF) is (Microbial infection) C.botulinum neurotoxin type A-binding. Residues 579–599 (AYWIYFVNFLGTLAVLPGNIV) traverse the membrane as a helical segment. At 600–609 (SALLMDRIGR) the chain is on the cytoplasmic side. The chain crosses the membrane as a helical span at residues 610-630 (LTMLGGSMVLSGISCFFLWFG). Residues 631-636 (TSESMM) lie on the Extracellular side of the membrane. A helical membrane pass occupies residues 637 to 657 (IGMLCLYNGLTISAWNSLDVV). Topologically, residues 658–669 (TVELYPTDRRAT) are cytoplasmic. A helical membrane pass occupies residues 670-690 (GFGFLNALCKAAAVLGNLIFG). Residues 691-698 (SLVSITKS) lie on the Extracellular side of the membrane. A helical membrane pass occupies residues 699-719 (IPILLASTVLVCGGLVGLCLP). Residues 720-727 (DTRTQVLM) lie on the Cytoplasmic side of the membrane.

It belongs to the major facilitator superfamily. In terms of assembly, interacts with SYT1 in a calcium-dependent manner. (Microbial infection) Interacts with C.botulinum neurotoxin type A1 and type A2 (BoNT/A, botA). Interaction is improved by glycosylation of SV2. Post-translationally, N-glycosylated. Upon expression in a kidney cell line the most abundant glycan on Asn-534 is GlcNAc(3)Hex(5), while on Asn-559 and Asn-565 the most abundant glycan is GlcNAc2Fuc1Man3GlcNAc3Gal3. Both Asn-559 and Asn-565 have a high degree of glycan heterogeneity.

Its subcellular location is the cytoplasmic vesicle. It is found in the secretory vesicle. The protein resides in the synaptic vesicle membrane. In terms of biological role, plays a role in the control of regulated secretion in neural and endocrine cells, enhancing selectively low-frequency neurotransmission. Positively regulates vesicle fusion by maintaining the readily releasable pool of secretory vesicles. Functionally, (Microbial infection) Receptor for C.botulinum neurotoxin type A (BoNT/A, botA); the toxin probably binds via extracellular loop 4. Recognition by BoNT/A relies on both protein-protein and protein-N-glycosylation; glycosylation of Asn-559 increases its affinity for BoNT/A. Also serves as a receptor for the closely related C.botulinum neurotoxin type A2; glycosylation is not essential but enhances the interaction. Its function is as follows. (Microbial infection) Possible receptor for C.botulinum neurotoxin type D (BoNT/D, botD); note that type D does not usually infect humans. This Homo sapiens (Human) protein is Synaptic vesicle glycoprotein 2C (SV2C).